The following is a 651-amino-acid chain: p-hydroxybenzoic acid efflux pump subunit AaeB (651 aa).

Helical transmembrane passes span 11–31 (FACK…WFEM), 41–61 (AAIV…SGAI), 65–85 (GLLR…IIMT), 91–111 (VVML…SSLV), 117–137 (YVFA…QSSP), 150–170 (EIIL…PRSV), 367–387 (LFWL…LGVV), 404–424 (FLIG…LVLP), 428–448 (QSLL…GIEI), 454–474 (GSLG…PMTF), and 480–500 (LDNA…IMLI).

It belongs to the aromatic acid exporter ArAE (TC 2.A.85) family.

It is found in the cell inner membrane. Functionally, forms an efflux pump with AaeA. Could function as a metabolic relief valve, allowing to eliminate certain compounds when they accumulate to high levels in the cell. The chain is p-hydroxybenzoic acid efflux pump subunit AaeB from Musicola paradisiaca (strain Ech703) (Dickeya paradisiaca).